A 735-amino-acid chain; its full sequence is MEIGTEISRKIRSAIKGKLQELGAYVDEELPDYIMVMVANKKSQDQMTEDLSLFLGNNTIRFTVWLHGVLDKLRSVTTEPSSLKSPDASIFDSHVPSNKSSFSRGDERRHEAAVPPLAVSSSRPEKRDSRVSTSSQEQKSTNVRHSYDDGASTRLMSTVKPLREPAPSEDVIDIKPEPDDLIDEDLNFVQENPLSQKKPTVTLTYGSSRPSIEIYRPPASRNADTGTHLNRLQLHPQQSSAHAAKQLDVQSSQVSEAGRLCEPPVLSSVEDTYSPFFRNNLDKMSIEDENFRKRKLPVVSSVVKVKRFSHDGEEEEEDEDYGTRIGSLSSSVSVPAKPERRPSLPPSKQANKNLILKAISEAQESVTKTTNYSAVPQKQTLPVAPRTRTSQEELLAEMVQGQNRAPRISPPVKEEEAKGDNTGKSQGTQQRQLLSRLQIDPVMVETMEMSQDYYDMESMVHADTRSFILKKPKLSEEIVVTPNQDSGMKTADALRVLSGHLMQTRDLVQPDKPASPKFIVTLDGVPSPPGYMSDQEEEMCFEGMKPVNQTSASNKGLRGLLHPQQLHLLSRQLEDPDGSFSNAEMTDLSVAQKPEKLLERCKYWPACKNGDECVYHHPISPCKAFPNCKFAEKCLFVHPNCKYDTKCTKADCPFTHMSRRASILTPKPVSSPAPSSNGQLCRYFPACKKMECPFYHPKHCRFNTQCTRPDCTFYHPTITVPPRHALKWIRPQSSE.

At Met-1 the chain carries N-acetylmethionine. Positions 78 to 153 are disordered; sequence TEPSSLKSPD…RHSYDDGAST (76 aa). Ser-85 carries the phosphoserine modification. Residues Lys-99, Lys-139, Lys-175, and Lys-198 each participate in a glycyl lysine isopeptide (Lys-Gly) (interchain with G-Cter in SUMO2) cross-link. A compositionally biased stretch (polar residues) spans 131 to 144; that stretch reads VSTSSQEQKSTNVR. Phosphoserine is present on Ser-240. Residues Lys-245, Lys-283, and Lys-295 each participate in a glycyl lysine isopeptide (Lys-Gly) (interchain with G-Cter in SUMO2) cross-link. The disordered stretch occupies residues 308-351; that stretch reads FSHDGEEEEEDEDYGTRIGSLSSSVSVPAKPERRPSLPPSKQAN. Ser-309, Ser-327, and Ser-343 each carry phosphoserine. Lys-357 carries the N6-acetyllysine; alternate modification. Lys-357 participates in a covalent cross-link: Glycyl lysine isopeptide (Lys-Gly) (interchain with G-Cter in SUMO2); alternate. Lys-378 is covalently cross-linked (Glycyl lysine isopeptide (Lys-Gly) (interchain with G-Cter in SUMO2)). Residues Ser-390 and Ser-409 each carry the phosphoserine modification. Residues 399-431 form a disordered region; sequence VQGQNRAPRISPPVKEEEAKGDNTGKSQGTQQR. Residues 412–421 show a composition bias toward basic and acidic residues; the sequence is VKEEEAKGDN. Lys-413 participates in a covalent cross-link: Glycyl lysine isopeptide (Lys-Gly) (interchain with G-Cter in SUMO2). Positions 422–431 are enriched in polar residues; sequence TGKSQGTQQR. A Glycyl lysine isopeptide (Lys-Gly) (interchain with G-Cter in SUMO2) cross-link involves residue Lys-489. Phosphoserine occurs at positions 498, 515, 527, and 620. C3H1-type zinc fingers lie at residues 595–620, 621–640, 641–656, 681–698, and 700–718; these read EKLL…HPIS, PCKA…VHPN, CKYD…PFTH, CRYF…YHPK, and CRFN…HPTI.

It belongs to the ZC3H14 family. In terms of assembly, homodimer; facilitating circular RNAs (circRNAs) formation. Associates with the spliceosome. Interacts with HOOK2. Interacts with ZFC3H1 in a RNase-sensitive manner. Expressed in hippocampal pyramidal neurons (at protein level). Expressed in kidney, liver, muscle, heart brain and testes. Expressed in hippocampal pyramidal neurons.

It is found in the nucleus speckle. Functionally, RNA-binding protein involved in the biogenesis of circular RNAs (circRNAs), which are produced by back-splicing circularization of pre-mRNAs. Acts by binding to both exon-intron boundary and 3'-UTR of pre-mRNAs to promote circRNA biogenesis through dimerization and the association with the spliceosome. Required for spermatogenesis via involvement in circRNA biogenesis. Regulates the pre-mRNA processing of ATP5MC1; preventing its degradation. Also binds the poly(A) tail of mRNAs; controlling poly(A) length in neuronal cells. The protein is Zinc finger CCCH domain-containing protein 14 of Mus musculus (Mouse).